The primary structure comprises 576 residues: MSTNPNAGIQPLTNSISQSASAHPELYHTTSHESVSTYQLQSQLSHSATSNLSTAANFHTRPPIANDENAQNLSTVNSSHSSELSKANLVDVEKCIQDPLLQIFPTVEDPDRFVFSIDPKSPLIAVNWPFRKKLKITCVYSYVALCSTFASSVFSVPAEAITTIFHISLTVSLLTMTVFLCGYIAGPIVWAPLSELSGRKLPLLIGMFGFGIFNISVAVAKDIQTIMMCRFFSGFFASAPLTVVAAAFADMYSNKHRGTAITIFAALVFDGPLVSPIIGGFLTKSYLGWRWTEYITSFMGFFALVIVYLFCDETYSKAIIRNKAKEYRAMSGNYFVHAKSEEEVLTVPDVAKNYLLVPMKLLFTEPIVFLITLYSSFVYAILYLLLEAYPIIFSEKRHFSMGVAELPYIGLLVGVFIGSAINISFEPWYYRRCLALGGKPDPEARLPPMMIGCFMFPAGIFWLSWSGYYSYVHWIVPTLSGLATGCGILLIFLQCLNYLIDAYLFRAASAVAANTIMRSAMAAGFPLFAVQMFHNMGVGWAGSLLGFIAVALIPMPFAFFFFGRKIREKSKMAVVL.

Polar residues-rich tracts occupy residues Met1–Ser21 and His28–Leu40. The segment at Met1–Leu40 is disordered. The next 12 membrane-spanning stretches (helical) occupy residues Phe149–Leu169, Leu173–Leu193, Lys200–Ala220, Phe231–Met251, Ile261–Phe281, Trp291–Cys311, Pro366–Leu386, Met401–Ile421, Leu446–Ser466, Val472–Phe492, Tyr503–Phe525, and Gly542–Phe562.

Belongs to the major facilitator superfamily. CAR1 family.

It localises to the endoplasmic reticulum. It is found in the golgi apparatus. Its subcellular location is the membrane. This is an uncharacterized protein from Schizosaccharomyces pombe (strain 972 / ATCC 24843) (Fission yeast).